The sequence spans 93 residues: Large ribosomal subunit protein eL37A (93 aa).

4 residues coordinate Zn(2+): C19, C22, C34, and C37. A C4-type zinc finger spans residues 19-37 (CRRCGRSSYHIQKSTCAQC).

It belongs to the eukaryotic ribosomal protein eL37 family. Requires Zn(2+) as cofactor.

Binds to the 23S rRNA. The chain is Large ribosomal subunit protein eL37A from Drosophila melanogaster (Fruit fly).